The following is a 229-amino-acid chain: Calcyclin-binding protein (229 aa).

Alanine 2 carries the N-acetylalanine modification. Residues 2-81 (ASALEELQKD…YTVKISNYGW (80 aa)) form an interaction with SIAH1 region. Serine 3 carries the phosphoserine modification. Residues lysine 10 and lysine 21 each carry the N6-acetyllysine modification. The residue at position 36 (serine 36) is a Phosphoserine. The tract at residues 38–59 (IETELRNKMQQKSQKKPEFDNE) is disordered. One can recognise a CS domain in the interval 74-168 (VKISNYGWDQ…AENTRWDYLT (95 aa)). The tract at residues 74–229 (VKISNYGWDQ…EKQAREDTEF (156 aa)) is interaction with SKP1. Residues lysine 86 and lysine 119 each carry the N6-acetyllysine modification. Positions 155-229 (CRKKAENTRW…EKQAREDTEF (75 aa)) are interaction with S100A6. The 61-residue stretch at 169–229 (QVEKECKEKE…EKQAREDTEF (61 aa)) folds into the SGS domain.

In terms of assembly, component of some large E3 complex at least composed of UBE2D1, SIAH1, CACYBP/SIP, SKP1, APC and TBL1X. Interacts directly with SIAH1, SIAH2 and SKP1. Interacts with protein of the S100 family S100A1, S100A6, S100B, S100P and S100A12 in a calcium-dependent manner. In terms of processing, phosphorylated on serine residues. Phosphorylated upon induction by RA or at high calcium concentrations.

Its subcellular location is the nucleus. It is found in the cytoplasm. In terms of biological role, may be involved in calcium-dependent ubiquitination and subsequent proteasomal degradation of target proteins. Probably serves as a molecular bridge in ubiquitin E3 complexes. Participates in the ubiquitin-mediated degradation of beta-catenin (CTNNB1). The polypeptide is Calcyclin-binding protein (Cacybp) (Rattus norvegicus (Rat)).